The primary structure comprises 348 residues: Flap endonuclease 1 (348 aa).

Residues Met1–Lys98 form an N-domain region. Mg(2+)-binding residues include Asp28, Asp80, Glu149, Glu151, Asp170, Asp172, and Asp234. An I-domain region spans residues Glu113 to Gly256. Residues Arg340–Phe348 are interaction with PCNA.

This sequence belongs to the XPG/RAD2 endonuclease family. FEN1 subfamily. In terms of assembly, interacts with PCNA. PCNA stimulates the nuclease activity without altering cleavage specificity. Mg(2+) is required as a cofactor.

Structure-specific nuclease with 5'-flap endonuclease and 5'-3' exonuclease activities involved in DNA replication and repair. During DNA replication, cleaves the 5'-overhanging flap structure that is generated by displacement synthesis when DNA polymerase encounters the 5'-end of a downstream Okazaki fragment. Binds the unpaired 3'-DNA end and kinks the DNA to facilitate 5' cleavage specificity. Cleaves one nucleotide into the double-stranded DNA from the junction in flap DNA, leaving a nick for ligation. Also involved in the base excision repair (BER) pathway. Acts as a genome stabilization factor that prevents flaps from equilibrating into structures that lead to duplications and deletions. Also possesses 5'-3' exonuclease activity on nicked or gapped double-stranded DNA. This Methanopyrus kandleri (strain AV19 / DSM 6324 / JCM 9639 / NBRC 100938) protein is Flap endonuclease 1.